The primary structure comprises 332 residues: NADH-quinone oxidoreductase subunit H (332 aa).

9 helical membrane passes run 4-24 (FAFF…IFAS), 44-64 (IGPD…MIKL), 78-98 (FIFA…LAAI), 120-140 (VALL…FLGG), 165-185 (VGAL…LVDI), 194-214 (FSWL…ALFI), 255-275 (IAGA…FWII), 279-299 (IMMI…RAAF), and 312-332 (YLIL…AVLL).

It belongs to the complex I subunit 1 family. As to quaternary structure, NDH-1 is composed of 14 different subunits. Subunits NuoA, H, J, K, L, M, N constitute the membrane sector of the complex.

Its subcellular location is the cell inner membrane. The catalysed reaction is a quinone + NADH + 5 H(+)(in) = a quinol + NAD(+) + 4 H(+)(out). Functionally, NDH-1 shuttles electrons from NADH, via FMN and iron-sulfur (Fe-S) centers, to quinones in the respiratory chain. The immediate electron acceptor for the enzyme in this species is believed to be ubiquinone. Couples the redox reaction to proton translocation (for every two electrons transferred, four hydrogen ions are translocated across the cytoplasmic membrane), and thus conserves the redox energy in a proton gradient. This subunit may bind ubiquinone. This is NADH-quinone oxidoreductase subunit H from Campylobacter jejuni subsp. jejuni serotype O:6 (strain 81116 / NCTC 11828).